A 174-amino-acid polypeptide reads, in one-letter code: Small ribosomal subunit protein uS5c (174 aa).

One can recognise an S5 DRBM domain in the interval 17 to 80 (WEERVVQVKR…TDAKKHLVTV (64 aa)).

Belongs to the universal ribosomal protein uS5 family. As to quaternary structure, part of the 30S ribosomal subunit. Contacts protein S4.

Its subcellular location is the plastid. The protein resides in the chloroplast. With S4 and S12 plays an important role in translational accuracy. This Porphyra purpurea (Red seaweed) protein is Small ribosomal subunit protein uS5c (rps5).